Consider the following 220-residue polypeptide: MAGMRLILVGPPGAGKGTQAPNIQKKYGIAHLATGDMLRSQVARQTELGKEAKKIMDQGGLVSDDIVTGMIKDEILNNPECKNGFILDGFPRTVVQAEKLTALLDELKLDLNTVLELQVDDELLVRRITGRLVHPGSGRSYHLEFNPPKVPMKDDVTGEPLIQRSDDNADALRKRLVTYHEQTTPVVEFYKKKGKWAAVDAAQKPEQVWEQIVAILEKAE.

Residue 13–18 (GAGKGT) participates in ATP binding. Residues 33 to 62 (ATGDMLRSQVARQTELGKEAKKIMDQGGLV) form an NMP region. Residues Thr-34, Arg-39, 60 to 62 (GLV), 89 to 92 (GFPR), and Gln-96 contribute to the AMP site. The tract at residues 130–167 (GRLVHPGSGRSYHLEFNPPKVPMKDDVTGEPLIQRSDD) is LID. ATP is bound by residues Arg-131 and 140-141 (SY). 2 residues coordinate AMP: Arg-164 and Arg-175. Gln-203 is a binding site for ATP.

This sequence belongs to the adenylate kinase family. AK2 subfamily. Monomer.

The protein localises to the cytoplasm. It is found in the cytosol. The protein resides in the mitochondrion intermembrane space. Its subcellular location is the nucleus. It catalyses the reaction AMP + ATP = 2 ADP. In terms of biological role, catalyzes the reversible transfer of the terminal phosphate group between ATP and AMP. Plays an important role in cellular energy homeostasis and in adenine nucleotide metabolism. Adenylate kinase activity is critical for regulation of the phosphate utilization and the AMP de novo biosynthesis pathways. This is Adenylate kinase (adk1) from Schizosaccharomyces pombe (strain 972 / ATCC 24843) (Fission yeast).